The primary structure comprises 290 residues: Small ribosomal subunit biogenesis GTPase RsgA (290 aa).

A CP-type G domain is found at 63–220 (KNELIRPPIA…IADTPGFSNL (158 aa)). Residues 112–115 (NKFD) and 162–170 (GPSGVGKST) contribute to the GTP site. Zn(2+) contacts are provided by Cys-244, Cys-249, His-251, and Cys-257.

This sequence belongs to the TRAFAC class YlqF/YawG GTPase family. RsgA subfamily. As to quaternary structure, monomer. Associates with 30S ribosomal subunit, binds 16S rRNA. It depends on Zn(2+) as a cofactor.

The protein localises to the cytoplasm. In terms of biological role, one of several proteins that assist in the late maturation steps of the functional core of the 30S ribosomal subunit. Helps release RbfA from mature subunits. May play a role in the assembly of ribosomal proteins into the subunit. Circularly permuted GTPase that catalyzes slow GTP hydrolysis, GTPase activity is stimulated by the 30S ribosomal subunit. The chain is Small ribosomal subunit biogenesis GTPase RsgA from Carboxydothermus hydrogenoformans (strain ATCC BAA-161 / DSM 6008 / Z-2901).